The sequence spans 194 residues: UPF0301 protein BPEN_258 (194 aa).

The protein belongs to the UPF0301 (AlgH) family.

The sequence is that of UPF0301 protein BPEN_258 from Blochmanniella pennsylvanica (strain BPEN).